A 325-amino-acid polypeptide reads, in one-letter code: Putative gluconeogenesis factor (325 aa).

The protein belongs to the gluconeogenesis factor family.

It localises to the cytoplasm. Required for morphogenesis under gluconeogenic growth conditions. This chain is Putative gluconeogenesis factor, found in Streptococcus pyogenes serotype M3 (strain ATCC BAA-595 / MGAS315).